A 189-amino-acid chain; its full sequence is Segregation and condensation protein B (189 aa).

Belongs to the ScpB family. Homodimer. Homodimerization may be required to stabilize the binding of ScpA to the Smc head domains. Component of a cohesin-like complex composed of ScpA, ScpB and the Smc homodimer, in which ScpA and ScpB bind to the head domain of Smc. The presence of the three proteins is required for the association of the complex with DNA.

It is found in the cytoplasm. In terms of biological role, participates in chromosomal partition during cell division. May act via the formation of a condensin-like complex containing Smc and ScpA that pull DNA away from mid-cell into both cell halves. This chain is Segregation and condensation protein B, found in Lachnoclostridium phytofermentans (strain ATCC 700394 / DSM 18823 / ISDg) (Clostridium phytofermentans).